Consider the following 399-residue polypeptide: Chromosomal replication initiator protein DnaA (399 aa).

The tract at residues 1–64 is domain I, interacts with DnaA modulators; it reads MELNALIKKI…EEEVRKLIEV (64 aa). Residues 64-77 form a domain II region; the sequence is VKEKEEKKKVEIKD. Residues 78–290 form a domain III, AAA+ region region; that stretch reads FLNPKYTLEN…GKIKLIKLKG (213 aa). Residues Ile89, Asn94, Gly122, Thr123, Gly124, Lys125, Thr126, and His127 each contribute to the ADP site. ATP is bound at residue Ile89. Residue Gly122 coordinates ATP. ATP-binding residues include Gly124, Lys125, Thr126, and His127. A Mg(2+)-binding site is contributed by Thr126. Val156 contacts ssDNA. Asp180 is a binding site for ATP. Asp181 provides a ligand contact to Mg(2+). SsDNA is bound by residues Lys188, Arg190, and Thr191. Arg277 is a binding site for ATP. The tract at residues 291-399 is domain IV, binds dsDNA; sequence FEGLERKERK…LEKQAFDKIC (109 aa).

Belongs to the DnaA family. As to quaternary structure, in the presence of ATP analog AMP-PCP forms a linear, right-handed spiral filament with 4 subunits arranged head-to-tail, about 122 Angstroms wide and about 360 Angstroms long. Mg(2+)-AMP-PCP binds at the subunit interface with the gamma phosphate coordinated by adjacent subunits. dsDNA probably wraps on the outside of the filament. ssDNA binds to the center of the helical filament via the AAA+ domain, which stretches the DNA.

The protein localises to the cytoplasm. Plays an essential role in the initiation and regulation of chromosomal replication. ATP-DnaA binds to the origin of replication (oriC) to initiate formation of the DNA replication initiation complex once per cell cycle. Binds the DnaA box (a 9 base pair repeat at the origin) and separates the double-stranded (ds)DNA. Forms a right-handed helical filament on oriC DNA; dsDNA binds to the exterior of the filament while single-stranded (ss)DNA is stabiized in the filament's interior. The ATP-DnaA-oriC complex binds and stabilizes one strand of the AT-rich DNA unwinding element (DUE), permitting loading of DNA polymerase. After initiation quickly degrades to an ADP-DnaA complex that is not apt for DNA replication. Binds acidic phospholipids. Its function is as follows. Able to melt short unstable dsDNA (15-mer with melting temperature, TM, 43 degrees Celsius) in the presence of a non-hydrolyzable ATP analog; a more stable dsDNA (20-mer, TM 55 degrees Celsius) is poor substrate. ADP does not support dsDNA melting. Addition of DnaA-AMP-PCP (an ATP analog, beta,gamma-methyleneadenosine 5'-triphosphate) to an oric-containing plasmid causes a DNA shift to more positively supercoiled topological species, stabilizing a positive wrap and right-handed filament as seen in the crystal structure without DNA. Filament formation generated by positive supercoiling may destabilize the origin unwinding element through compensatory negative supercoiling strain. The chain is Chromosomal replication initiator protein DnaA from Aquifex aeolicus (strain VF5).